The sequence spans 41 residues: uncharacterized protein (41 aa).

The disordered stretch occupies residues 1–41; that stretch reads MGKKHRNRITGQKKNNHIPEKDIIAAEEAHGKEYSAAKRKP. Positions 17-41 are enriched in basic and acidic residues; the sequence is HIPEKDIIAAEEAHGKEYSAAKRKP.

This is an uncharacterized protein from Bacillus subtilis (strain 168).